The primary structure comprises 550 residues: Sorting nexin-33 (550 aa).

The SH3 domain occupies 1 to 61 (MALKARALYS…PASYVEIQSS (61 aa)). The tract at residues 62 to 152 (RSGSVQVDYS…QDSIASGKRG (91 aa)) is disordered. Over residues 86-102 (YDDDDEEDDDDWDDWDD) the composition is skewed to acidic residues. Positions 128–144 (SRPEYSHRPRPALERQD) are enriched in basic and acidic residues. Residues 206–316 (FNCSVEEPTK…HFLGCQDEKQ (111 aa)) enclose the PX domain. Positions 347–550 (LQDVEERVDV…EKTLHLYDEL (204 aa)) constitute a BAR domain.

Belongs to the sorting nexin family.

The protein resides in the cytoplasm. The protein localises to the cytosol. It localises to the membrane. Its subcellular location is the cytoplasmic vesicle membrane. In terms of biological role, plays a role in the reorganization of the cytoskeleton, endocytosis and cellular vesicle trafficking, both during interphase and at the end of mitotic cell divisions. Required for efficient progress through mitosis and cytokinesis. Required for normal formation of the cleavage furrow at the end of mitosis. Modulates endocytosis of cell-surface proteins. Promotes membrane tubulation (in vitro). May promote the formation of macropinosomes. In Xenopus laevis (African clawed frog), this protein is Sorting nexin-33 (snx33).